The sequence spans 132 residues: Major pollen allergen Art v 1 (132 aa).

The first 24 residues, 1-24 (MAKCSYVFCAVLLIFIVAIGEMEA), serve as a signal peptide directing secretion. Positions 28 to 77 (KLCEKTSKTYSGKCDNKKCDKKCIEWEKAQHGACHKREAGKESCFCYFDC) are defensin-like domain. 4 disulfides stabilise this stretch: Cys-30–Cys-77, Cys-41–Cys-61, Cys-46–Cys-71, and Cys-50–Cys-73. 2 epitope recognized by IgE antibodies of mugwort pollen-sensitized patients regions span residues 64–70 (REAGKES) and 79–87 (KSPPGATPA). A disordered region spans residues 81-132 (PPGATPAPPGAAPPPAAGGSPSPPADGGSPPPPADGGSPPVDGGSPPPPSTH). Positions 83–114 (GATPAPPGAAPPPAAGGSPSPPADGGSPPPPA) are enriched in pro residues. The span at 115-124 (DGGSPPVDGG) shows a compositional bias: low complexity.

It in the N-terminal section; belongs to the DEFL family. The mature protein extracted from the plant exhibits an average rate of 76% of hydroxyprolines. In terms of processing, O-glycosylated. O-linkage of 3 galactoses plus 9-16 or 21-23 arabinose residues attached on one or two hydroxyprolines.

Its subcellular location is the secreted. The chain is Major pollen allergen Art v 1 from Artemisia vulgaris (Mugwort).